Here is a 593-residue protein sequence, read N- to C-terminus: Double-stranded RNA-binding protein 2 (593 aa).

DRBM domains lie at 1-70 (MYKN…ELSK) and 87-155 (IYKN…ELKQ). The segment covering 188–197 (LNQTNGGKTP) has biased composition (polar residues). Disordered stretches follow at residues 188-221 (LNQT…KSNA), 357-408 (APDF…ESNQ), and 546-593 (VNSS…KLHI). Residues 205–219 (SSNRPSSRRPSYPKS) show a composition bias toward low complexity. Residues 378–408 (ESSPASEQESKSHTASSSATRSPSQQLESNQ) are compositionally biased toward polar residues. A compositionally biased stretch (low complexity) spans 572–586 (RTNTSDTSNAATASS).

Functionally, binds double-stranded RNA. This chain is Double-stranded RNA-binding protein 2 (DRB2), found in Oryza sativa subsp. japonica (Rice).